A 758-amino-acid chain; its full sequence is Probable serine/threonine-protein kinase HAL5-like (758 aa).

Disordered stretches follow at residues 1-170 and 189-252; these read MGTV…SADD and IDNA…HRGR. Residues 22 to 57 are compositionally biased toward polar residues; the sequence is RSISGSIKSLFKPSSVQNSTPTVSPHESSPPLGNSD. A compositionally biased stretch (basic and acidic residues) spans 58–69; it reads NLKKLVDTKRAE. Residues 129 to 153 show a composition bias toward low complexity; the sequence is SSPRQSSSTNDRSSITSATSSVTSA. Over residues 216–226 the composition is skewed to basic and acidic residues; the sequence is DKNFESSEYEI. Over residues 227–247 the composition is skewed to polar residues; the sequence is RSNSLSRIHSTPQNESPTVNN. The Protein kinase domain occupies 442-744; the sequence is KSMGVVLGHG…IDQLLQSPWM (303 aa). Residues 448 to 456 and lysine 485 each bind ATP; that span reads LGHGAYGVV. Aspartate 595 acts as the Proton acceptor in catalysis.

It belongs to the protein kinase superfamily. CAMK Ser/Thr protein kinase family. NPR/HAL subfamily. HAL5 sub-subfamily.

It catalyses the reaction L-seryl-[protein] + ATP = O-phospho-L-seryl-[protein] + ADP + H(+). It carries out the reaction L-threonyl-[protein] + ATP = O-phospho-L-threonyl-[protein] + ADP + H(+). In Vanderwaltozyma polyspora (strain ATCC 22028 / DSM 70294 / BCRC 21397 / CBS 2163 / NBRC 10782 / NRRL Y-8283 / UCD 57-17) (Kluyveromyces polysporus), this protein is Probable serine/threonine-protein kinase HAL5-like.